A 114-amino-acid polypeptide reads, in one-letter code: SOSS complex subunit C homolog (114 aa).

A compositionally biased stretch (polar residues) spans 1–10 (MAFQQHGNQE). Residues 1-61 (MAFQQHGNQE…AGNTSASRIH (61 aa)) are disordered.

This sequence belongs to the SOSS-C family.

In Nematostella vectensis (Starlet sea anemone), this protein is SOSS complex subunit C homolog.